The sequence spans 336 residues: Glycerol-3-phosphate dehydrogenase [NAD(P)+] (336 aa).

Positions 16, 17, 37, and 111 each coordinate NADPH. 3 residues coordinate sn-glycerol 3-phosphate: Lys-111, Gly-140, and Thr-142. Ala-144 provides a ligand contact to NADPH. 5 residues coordinate sn-glycerol 3-phosphate: Lys-196, Asp-249, Ser-259, Arg-260, and Asn-261. The active-site Proton acceptor is Lys-196. Arg-260 provides a ligand contact to NADPH. NADPH is bound by residues Val-284 and Glu-286.

It belongs to the NAD-dependent glycerol-3-phosphate dehydrogenase family.

It localises to the cytoplasm. The enzyme catalyses sn-glycerol 3-phosphate + NAD(+) = dihydroxyacetone phosphate + NADH + H(+). It carries out the reaction sn-glycerol 3-phosphate + NADP(+) = dihydroxyacetone phosphate + NADPH + H(+). Its pathway is membrane lipid metabolism; glycerophospholipid metabolism. Functionally, catalyzes the reduction of the glycolytic intermediate dihydroxyacetone phosphate (DHAP) to sn-glycerol 3-phosphate (G3P), the key precursor for phospholipid synthesis. The polypeptide is Glycerol-3-phosphate dehydrogenase [NAD(P)+] (Glaesserella parasuis serovar 5 (strain SH0165) (Haemophilus parasuis)).